The sequence spans 724 residues: Phenylalanine ammonia-lyase (724 aa).

Tyr-99 acts as the Proton donor/acceptor in catalysis. Positions Ala-204 to Gly-206 form a cross-link, 5-imidazolinone (Ala-Gly). Ser-205 is subject to 2,3-didehydroalanine (Ser). (E)-cinnamate contacts are provided by Asn-265, Gln-355, Arg-361, Asn-391, Lys-462, Glu-490, and Asn-493.

Belongs to the PAL/histidase family. In terms of assembly, homotetramer. In terms of processing, contains an active site 4-methylidene-imidazol-5-one (MIO), which is formed autocatalytically by cyclization and dehydration of residues Ala-Ser-Gly.

The protein resides in the cytoplasm. It catalyses the reaction L-phenylalanine = (E)-cinnamate + NH4(+). It participates in phenylpropanoid metabolism; trans-cinnamate biosynthesis; trans-cinnamate from L-phenylalanine: step 1/1. Its function is as follows. Catalyzes the non-oxidative deamination of L-phenylalanine to form trans-cinnamic acid and a free ammonium ion. Facilitates the commitment step in phenylpropanoid pathways that produce secondary metabolites such as lignins, coumarins and flavonoids. This Flammulina velutipes (Agaricus velutipes) protein is Phenylalanine ammonia-lyase.